The primary structure comprises 307 residues: uncharacterized protein (307 aa).

A disordered region spans residues 254–278; sequence HSRHHRRHHRRHHHHHHQNSSHSDE. The span at 255–272 shows a compositional bias: basic residues; it reads SRHHRRHHRRHHHHHHQN.

This sequence to yeast YOR062c.

This is an uncharacterized protein from Saccharomyces cerevisiae (strain ATCC 204508 / S288c) (Baker's yeast).